A 394-amino-acid chain; its full sequence is MIRKERAILALEDGTVYRGYAFGYRGETVGEVVFNTSMTGYQEIMTDPSYNGQIVTITYPHVGNYGVAIYDMESNKPYVRGFISREFSGEYSNYRAQQSLEAFMQQYGVVSIQGIDTRALVRRLRSGGVVKGVIAHRSFTHPEDPYGEFTPAEEQIYVQRARDHQDIDGFDMTKEVTTALPYAFPTLRQGKRVVLMDFGIKHTIIERLAEVGIEPIVVPAHTTPAQIMALQPHGLFLSNGPGDPAPLEYAHKTAWEMMGLLPTFGICLGHQILGLAAGGQTFKMKFGHRGGNQPVKNLLTGNVEITSQNHGYAVDLDSIPNGAFVATHVNLNDGTLEGMAHSRYPVFSVQYHPEASPGPHDSRYLFDRFIEEIDAFDGGNGTPIIKANPGRLGV.

The tract at residues 1–188 is CPSase; the sequence is MIRKERAILA…ALPYAFPTLR (188 aa). 3 residues coordinate L-glutamine: Ser49, Gly240, and Gly242. The Glutamine amidotransferase type-1 domain maps to 192–379; the sequence is RVVLMDFGIK…IEEIDAFDGG (188 aa). Residue Cys267 is the Nucleophile of the active site. 5 residues coordinate L-glutamine: Leu268, Gln271, Asn309, Gly311, and Tyr312. Residues His352 and Glu354 contribute to the active site.

Belongs to the CarA family. In terms of assembly, composed of two chains; the small (or glutamine) chain promotes the hydrolysis of glutamine to ammonia, which is used by the large (or ammonia) chain to synthesize carbamoyl phosphate. Tetramer of heterodimers (alpha,beta)4.

The enzyme catalyses hydrogencarbonate + L-glutamine + 2 ATP + H2O = carbamoyl phosphate + L-glutamate + 2 ADP + phosphate + 2 H(+). It carries out the reaction L-glutamine + H2O = L-glutamate + NH4(+). The protein operates within amino-acid biosynthesis; L-arginine biosynthesis; carbamoyl phosphate from bicarbonate: step 1/1. It functions in the pathway pyrimidine metabolism; UMP biosynthesis via de novo pathway; (S)-dihydroorotate from bicarbonate: step 1/3. Its function is as follows. Small subunit of the glutamine-dependent carbamoyl phosphate synthetase (CPSase). CPSase catalyzes the formation of carbamoyl phosphate from the ammonia moiety of glutamine, carbonate, and phosphate donated by ATP, constituting the first step of 2 biosynthetic pathways, one leading to arginine and/or urea and the other to pyrimidine nucleotides. The small subunit (glutamine amidotransferase) binds and cleaves glutamine to supply the large subunit with the substrate ammonia. The polypeptide is Carbamoyl phosphate synthase small chain (Deinococcus radiodurans (strain ATCC 13939 / DSM 20539 / JCM 16871 / CCUG 27074 / LMG 4051 / NBRC 15346 / NCIMB 9279 / VKM B-1422 / R1)).